Consider the following 248-residue polypeptide: 2,3-bisphosphoglycerate-dependent phosphoglycerate mutase (248 aa).

Substrate is bound by residues 8-15, 21-22, Arg60, 87-90, Lys98, 114-115, and 183-184; these read RHGESTWN, TG, ERHY, RR, and GN. His9 functions as the Tele-phosphohistidine intermediate in the catalytic mechanism. Glu87 (proton donor/acceptor) is an active-site residue.

The protein belongs to the phosphoglycerate mutase family. BPG-dependent PGAM subfamily. Homodimer.

It catalyses the reaction (2R)-2-phosphoglycerate = (2R)-3-phosphoglycerate. Its pathway is carbohydrate degradation; glycolysis; pyruvate from D-glyceraldehyde 3-phosphate: step 3/5. Its function is as follows. Catalyzes the interconversion of 2-phosphoglycerate and 3-phosphoglycerate. This chain is 2,3-bisphosphoglycerate-dependent phosphoglycerate mutase, found in Burkholderia ambifaria (strain ATCC BAA-244 / DSM 16087 / CCUG 44356 / LMG 19182 / AMMD) (Burkholderia cepacia (strain AMMD)).